Consider the following 286-residue polypeptide: 4-diphosphocytidyl-2-C-methyl-D-erythritol kinase (286 aa).

Residue Lys-11 is part of the active site. An ATP-binding site is contributed by 93–103; it reads PFGAGLGGGSS. Asp-135 is an active-site residue.

The protein belongs to the GHMP kinase family. IspE subfamily.

It catalyses the reaction 4-CDP-2-C-methyl-D-erythritol + ATP = 4-CDP-2-C-methyl-D-erythritol 2-phosphate + ADP + H(+). The protein operates within isoprenoid biosynthesis; isopentenyl diphosphate biosynthesis via DXP pathway; isopentenyl diphosphate from 1-deoxy-D-xylulose 5-phosphate: step 3/6. In terms of biological role, catalyzes the phosphorylation of the position 2 hydroxy group of 4-diphosphocytidyl-2C-methyl-D-erythritol. In Prosthecochloris aestuarii (strain DSM 271 / SK 413), this protein is 4-diphosphocytidyl-2-C-methyl-D-erythritol kinase.